The primary structure comprises 291 residues: Gamma-soluble NSF attachment protein (291 aa).

This sequence belongs to the SNAP family.

The protein resides in the membrane. Its function is as follows. Required for vesicular transport between the endoplasmic reticulum and the Golgi apparatus. Binds to SNARE complex and then recruits NSF to disassemble it. The polypeptide is Gamma-soluble NSF attachment protein (GSNAP) (Arabidopsis thaliana (Mouse-ear cress)).